A 564-amino-acid polypeptide reads, in one-letter code: Septation ring formation regulator EzrA (564 aa).

Residues 1 to 4 lie on the Extracellular side of the membrane; the sequence is MVLF. The chain crosses the membrane as a helical span at residues 5–23; that stretch reads IILAILVVILIAIGVLFYM. Residues 24 to 564 are Cytoplasmic-facing; it reads RSNKRNLIEK…KHIEEQVIKE (541 aa). Coiled-coil stretches lie at residues 84 to 126, 165 to 223, 271 to 303, and 350 to 435; these read VEEK…HQVT, EAAE…LIRE, MISRLELDEANNKLENINDKLDEMYDLIEYEVK, and VRQF…RRLL.

Belongs to the EzrA family.

The protein resides in the cell membrane. In terms of biological role, negative regulator of FtsZ ring formation; modulates the frequency and position of FtsZ ring formation. Inhibits FtsZ ring formation at polar sites. Interacts either with FtsZ or with one of its binding partners to promote depolymerization. The sequence is that of Septation ring formation regulator EzrA from Staphylococcus epidermidis (strain ATCC 35984 / DSM 28319 / BCRC 17069 / CCUG 31568 / BM 3577 / RP62A).